Here is a 350-residue protein sequence, read N- to C-terminus: 3-methylornithine synthase (350 aa).

A Radical SAM core domain is found at 57-279 (NRVFLNCFIY…PKRLIPASLD (223 aa)). [4Fe-4S] cluster contacts are provided by C71 and C75. F77 contacts S-adenosyl-L-methionine. Position 78 (C78) interacts with [4Fe-4S] cluster. The (3R)-3-methyl-D-ornithine site is built by D112, S146, and Y169. S-adenosyl-L-methionine is bound by residues E171, R182, and R190. (3R)-3-methyl-D-ornithine is bound at residue R235. Positions 240 and 242 each coordinate S-adenosyl-L-methionine. S277, T298, and S299 together coordinate (3R)-3-methyl-D-ornithine.

It belongs to the radical SAM superfamily. PylB family. [4Fe-4S] cluster is required as a cofactor. It depends on S-adenosyl-L-methionine as a cofactor.

The enzyme catalyses L-lysine = (3R)-3-methyl-D-ornithine. Its pathway is amino-acid biosynthesis; L-pyrrolysine biosynthesis. Its function is as follows. Catalyzes the isomerization of L-lysine to (3R)-3-methyl-D-ornithine via a radical-based mechanism, a step in the biosynthesis pathway of pyrrolysine. Also catalyzes the reverse reaction in vitro, converting (3R)-3-methyl-D-ornithine into L-lysine. The polypeptide is 3-methylornithine synthase (Methanosarcina barkeri (strain Fusaro / DSM 804)).